Consider the following 397-residue polypeptide: Tryptophan synthase beta chain (397 aa).

K87 is modified (N6-(pyridoxal phosphate)lysine).

This sequence belongs to the TrpB family. As to quaternary structure, tetramer of two alpha and two beta chains. Pyridoxal 5'-phosphate is required as a cofactor.

It catalyses the reaction (1S,2R)-1-C-(indol-3-yl)glycerol 3-phosphate + L-serine = D-glyceraldehyde 3-phosphate + L-tryptophan + H2O. It participates in amino-acid biosynthesis; L-tryptophan biosynthesis; L-tryptophan from chorismate: step 5/5. Its function is as follows. The beta subunit is responsible for the synthesis of L-tryptophan from indole and L-serine. In Salmonella choleraesuis (strain SC-B67), this protein is Tryptophan synthase beta chain.